We begin with the raw amino-acid sequence, 332 residues long: Tetraacyldisaccharide 4'-kinase (332 aa).

53–60 (SVGGNGKT) lines the ATP pocket.

This sequence belongs to the LpxK family.

It carries out the reaction a lipid A disaccharide + ATP = a lipid IVA + ADP + H(+). Its pathway is glycolipid biosynthesis; lipid IV(A) biosynthesis; lipid IV(A) from (3R)-3-hydroxytetradecanoyl-[acyl-carrier-protein] and UDP-N-acetyl-alpha-D-glucosamine: step 6/6. In terms of biological role, transfers the gamma-phosphate of ATP to the 4'-position of a tetraacyldisaccharide 1-phosphate intermediate (termed DS-1-P) to form tetraacyldisaccharide 1,4'-bis-phosphate (lipid IVA). The sequence is that of Tetraacyldisaccharide 4'-kinase from Haemophilus influenzae (strain 86-028NP).